Reading from the N-terminus, the 308-residue chain is Taste receptor type 2 member 43 (308 aa).

Position 1 (methionine 1) is a topological domain, extracellular. A helical membrane pass occupies residues 2 to 22 (ITFLPIIFSILVVVTFVIGNC). The Cytoplasmic segment spans residues 23 to 46 (ANGFIALVNSTEWVKRQKISFADQ). A helical transmembrane segment spans residues 47 to 67 (ILTALAVSRVGLLWVLLLNWY). Topologically, residues 68–86 (ATVLNPAFYSVEVRTIVYN) are extracellular. Residues 87–107 (LWAVINHFSNWLATSLSIFYL) traverse the membrane as a helical segment. Residues 108–126 (LKIANFSNLIFLHLKRRVK) lie on the Cytoplasmic side of the membrane. The helical transmembrane segment at 127–147 (SVVLVILLGPLLFLVCHLFVV) threads the bilayer. The Extracellular segment spans residues 148–178 (NMNEIVRTKEYEGNMTWKSKLRSAMYLSNTT). N-linked (GlcNAc...) asparagine glycans are attached at residues asparagine 161 and asparagine 176. Residues 179-199 (VTILANLVPFILTLISFLLLI) traverse the membrane as a helical segment. Over 200–229 (CSLCKHLKKMQLRDKGSQDPSTKVHIKALQ) the chain is Cytoplasmic. A helical membrane pass occupies residues 230 to 249 (TVISLLLCVIYFLSIMISSW). Residues 250-258 (SLGRVENKA) lie on the Extracellular side of the membrane. A helical transmembrane segment spans residues 259–279 (VFMFCKAIRFSYPSAHAFILI). Residues 280 to 308 (WGNKKLKQTLLSVLWNVRYCVKGQKLPSP) lie on the Cytoplasmic side of the membrane.

It belongs to the G-protein coupled receptor T2R family.

The protein localises to the membrane. It localises to the cell projection. It is found in the cilium membrane. In terms of biological role, gustducin-coupled receptor immplicated in the perception of bitter compounds in the oral cavity and the gastrointestinal tract. Signals through PLCB2 and the calcium-regulated cation channel TRPM5. Activated by the sulfonyl amide sweeteners saccharin and acesulfame K. In airway epithelial cells, binding of bitter compounds increases the intracellular calcium ion concentration and stimulates ciliary beat frequency. May act as chemosensory receptors in airway epithelial cells to detect and eliminate potential noxious agents from the airways. The protein is Taste receptor type 2 member 43 (TAS2R43) of Papio hamadryas (Hamadryas baboon).